The sequence spans 153 residues: Small ribosomal subunit protein bS16 (153 aa).

Residues 130-153 (EAEAAAAAEEAPAEEAAEEAPAEA) form a disordered region. A compositionally biased stretch (acidic residues) spans 140–153 (APAEEAAEEAPAEA).

It belongs to the bacterial ribosomal protein bS16 family.

This is Small ribosomal subunit protein bS16 from Bifidobacterium longum subsp. infantis (strain ATCC 15697 / DSM 20088 / JCM 1222 / NCTC 11817 / S12).